The primary structure comprises 137 residues: ATP synthase epsilon chain, chloroplastic (137 aa).

It belongs to the ATPase epsilon chain family. In terms of assembly, F-type ATPases have 2 components, CF(1) - the catalytic core - and CF(0) - the membrane proton channel. CF(1) has five subunits: alpha(3), beta(3), gamma(1), delta(1), epsilon(1). CF(0) has three main subunits: a, b and c.

It is found in the plastid. The protein resides in the chloroplast thylakoid membrane. Its function is as follows. Produces ATP from ADP in the presence of a proton gradient across the membrane. This is ATP synthase epsilon chain, chloroplastic from Bigelowiella natans (Pedinomonas minutissima).